The sequence spans 361 residues: Epoxyqueuosine reductase (361 aa).

Catalysis depends on Asp147, which acts as the Proton donor. The 30-residue stretch at 193–222 (VDPAMDSEHCGRCSACLDICPTAAFVGPYR) folds into the 4Fe-4S ferredoxin-type domain. Positions 202, 205, 208, 212, 228, 255, 258, and 262 each coordinate [4Fe-4S] cluster.

Belongs to the QueG family. In terms of assembly, monomer. The cofactor is cob(II)alamin. [4Fe-4S] cluster serves as cofactor.

The protein localises to the cytoplasm. The catalysed reaction is epoxyqueuosine(34) in tRNA + AH2 = queuosine(34) in tRNA + A + H2O. The protein operates within tRNA modification; tRNA-queuosine biosynthesis. Catalyzes the conversion of epoxyqueuosine (oQ) to queuosine (Q), which is a hypermodified base found in the wobble positions of tRNA(Asp), tRNA(Asn), tRNA(His) and tRNA(Tyr). The sequence is that of Epoxyqueuosine reductase from Pseudomonas aeruginosa (strain ATCC 15692 / DSM 22644 / CIP 104116 / JCM 14847 / LMG 12228 / 1C / PRS 101 / PAO1).